Here is a 458-residue protein sequence, read N- to C-terminus: MPPGPEVPVQVWVDGQLFQAEQSLLVEHCGFFRGLFRSGMREARAAEVRLGALSASGFRTALRVLRGERPALAAEDELLQAVECAAFLQAPALARFLEHSVTSDNCSLLCDAAAAFGLRDVLHSAALFIRDGSHELVAQLELPEARAYVAALRPSTYVAVSTHTPTPGFLEDASRTMCFLDEEEDAWRTLAALPLEASTLLAGVATLGNKLYIVGGVCGASKEVVELGFCYDPEGGTWCEFPSPHQPRYDMALAGFEGRLYAIGGEFQRTPMSSVECYDPATGCWSFVADLPQPATGVPCAQARGRLFVCLWRPADITAVVEYVVQMDKWLPVAELCRSQSYGHFMVAHRDSLYVVRNGPSDDFLHCAIDCLNLVTGQWTSLPGQFVNSKGALFTSVVRGDTVYTVNRVSTLVYAIEDGTWRLLREKAGFPRPGSLQTFLLRLPPGTTGPVATALPEL.

A BTB domain is found at 7–74 (VPVQVWVDGQ…LRGERPALAA (68 aa)). Kelch repeat units lie at residues 159-209 (AVST…TLGN), 210-258 (KLYI…GFEG), 259-305 (RLYA…QARG), 307-350 (LFVC…VAHR), and 352-400 (SLYV…VVRG).

Component of the BCR(KBTBD13) E3 ubiquitin ligase complex, at least composed of CUL3 and KBTBD13 and RBX1. Interacts with CUL3. Autoubiquitinated. As to expression, expressed in skeletal muscle, heart and lung.

The protein resides in the cytoplasm. Its pathway is protein modification; protein ubiquitination. Functionally, substrate-specific adapter of a BCR (BTB-CUL3-RBX1) E3 ubiquitin ligase complex. In Mus musculus (Mouse), this protein is Kelch repeat and BTB domain-containing protein 13 (Kbtbd13).